Consider the following 3164-residue polypeptide: Large tegument protein deneddylase (3164 aa).

Positions 1-273 (MGGGNNTNPG…SETYLQDEAF (273 aa)) are deubiquitination activity. The Peptidase C76 domain maps to 45 to 263 (VVTGARNQFA…TAAALHLYGA (219 aa)). Catalysis depends on residues C65, D197, and H199. The tract at residues 289-508 (AGLGEPCVGV…GEDDGPTVPA (220 aa)) is disordered. Residues 308–321 (GPHPPTAAQSPPPT) are compositionally biased toward pro residues. Residues 343-353 (PEAKRPNRAPD) show a composition bias toward basic and acidic residues. The segment covering 365 to 390 (PTDPPSADPPSADPPSAIPPPPPSAP) has biased composition (pro residues). Over residues 416–432 (GRHRARYSAGLPKRRRP) the composition is skewed to basic residues. Residues 426–432 (LPKRRRP) are nuclear localization signal. The tract at residues 579–609 (LELCVIFFFERVLAFLIENGARTHTQAGVAG) is interaction with inner tegument protein. The interval 579–609 (LELCVIFFFERVLAFLIENGARTHTQAGVAG) is interaction with UL37. 3 disordered regions span residues 2296 to 2318 (QTLS…LYRP), 2518 to 2552 (HPVY…LGPG), and 2583 to 3020 (ASDD…SLSG). A compositionally biased stretch (pro residues) spans 2653 to 2667 (QSSPAPPDATAPRPP). The span at 2668–2680 (ASSRASAASSSGS) shows a compositional bias: low complexity. Positions 2681–2690 (RARRHRRARS) are enriched in basic residues. A compositionally biased stretch (pro residues) spans 2722–2732 (PPAPPKPPEPA). The segment covering 2834–2843 (PAEPTSSSPA) has biased composition (low complexity). Residues 2844 to 2866 (GPSPPPPAVQPVAPPPTSGPPPT) show a composition bias toward pro residues. The segment covering 2886–2897 (TRQPVATPTTSA) has biased composition (polar residues). 35 consecutive repeat copies span residues 2911-2912 (PQ), 2913-2914 (PQ), 2915-2916 (PQ), 2917-2918 (PQ), 2919-2920 (PQ), 2921-2922 (PQ), 2923-2924 (PQ), 2925-2926 (PQ), 2927-2928 (PQ), 2929-2930 (PQ), 2931-2932 (PQ), 2933-2934 (PQ), 2935-2936 (PQ), 2937-2938 (PQ), 2939-2940 (PQ), 2941-2942 (PQ), 2943-2944 (PQ), 2945-2946 (PQ), 2947-2948 (PQ), 2949-2950 (PQ), 2951-2952 (PQ), 2953-2954 (PQ), 2955-2956 (PQ), 2957-2958 (PQ), 2959-2960 (PQ), 2961-2962 (PQ), 2963-2964 (PQ), 2965-2966 (PQ), 2967-2968 (PQ), 2969-2970 (PQ), 2971-2972 (PQ), 2973-2974 (PQ), 2975-2976 (PQ), 2977-2978 (PQ), and 2979-2980 (PQ). The tract at residues 2911–2980 (PQPQPQPQPQ…PQPQPQPQPQ (70 aa)) is 35 X 2 AA tandem repeats of P-Q. The span at 2912 to 2978 (QPQPQPQPQP…PQPQPQPQPQ (67 aa)) shows a compositional bias: pro residues. Polar residues predominate over residues 2999-3014 (NRPSVPASASSTNPRT).

Belongs to the herpesviridae large tegument protein family. Interacts with host CUL1 and CUL4A; these interactions inhibit the E3 ligase activity of cullins. Interacts with inner tegument protein. Interacts with capsid vertex specific component CVC2. Interacts with the major capsid protein/MCP. Interacts with VP16; this interaction is important for outer tegument association to the capsid. May form homodimers. Proteolytically processed, possibly into several polypeptides. Enzymatic activity is only detectable following cleavage of the UL36 protein, which occurs late during viral replication.

It is found in the virion tegument. The protein resides in the host cytoplasm. The protein localises to the host nucleus. The catalysed reaction is Thiol-dependent hydrolysis of ester, thioester, amide, peptide and isopeptide bonds formed by the C-terminal Gly of ubiquitin (a 76-residue protein attached to proteins as an intracellular targeting signal).. Its function is as follows. Large tegument protein that plays multiple roles in the viral cycle. During viral entry, remains associated with the capsid while most of the tegument is detached and participates in the capsid transport toward the host nucleus. Plays a role in the routing of the capsid at the nuclear pore complex and subsequent uncoating. Within the host nucleus, acts as a deneddylase and promotes the degradation of nuclear CRLs (cullin-RING ubiquitin ligases) and thereby stabilizes nuclear CRL substrates, while cytoplasmic CRLs remain unaffected. These modifications prevent host cell cycle S-phase progression and create a favorable environment allowing efficient viral genome replication. Participates later in the secondary envelopment of capsids. Indeed, plays a linker role for the association of the outer viral tegument to the capsids together with the inner tegument protein. This chain is Large tegument protein deneddylase, found in Human herpesvirus 1 (strain 17) (HHV-1).